A 292-amino-acid chain; its full sequence is Zinc finger protein OZF (292 aa).

10 C2H2-type zinc fingers span residues 16 to 38, 44 to 66, 72 to 94, 100 to 122, 128 to 150, 156 to 178, 184 to 206, 212 to 234, 240 to 262, and 268 to 290; these read FACK…EHFH, FECN…QNTH, LECN…QKIH, FECK…QRTH, FICK…EKIH, FKCN…QNIH, YECN…VRIH, YECN…VRSH, YGCN…LRIH, and YQCS…QKIH. Glycyl lysine isopeptide (Lys-Gly) (interchain with G-Cter in SUMO2) cross-links involve residues lysine 28, lysine 51, and lysine 56. Glycyl lysine isopeptide (Lys-Gly) (interchain with G-Cter in SUMO) cross-links involve residues lysine 157 and lysine 169. A Glycyl lysine isopeptide (Lys-Gly) (interchain with G-Cter in SUMO2) cross-link involves residue lysine 173. Residues 212–292 are interaction with TERF2IP; it reads YECNVCGKAF…HIRHQKIHTH (81 aa).

This sequence belongs to the krueppel C2H2-type zinc-finger protein family. In terms of assembly, binds DNA. Interacts with SUMO conjugating enzyme UBC9/UBE2I. Interacts with the telomeric protein TERF2IP.

Its subcellular location is the nucleus. The sequence is that of Zinc finger protein OZF (ZNF146) from Bos taurus (Bovine).